We begin with the raw amino-acid sequence, 442 residues long: GTPase Der (442 aa).

EngA-type G domains lie at 4–169 (PIVA…PENN) and 178–353 (IKIA…EQAT). Residues 10-17 (GRPNVGKS), 57-61 (DTGGL), 121-124 (NKIE), 184-191 (GRPNVGKS), 231-235 (DTAGM), and 296-299 (NKWD) each bind GTP. The KH-like domain maps to 354 to 438 (RRISTSVLNE…PMRFFIRERE (85 aa)).

The protein belongs to the TRAFAC class TrmE-Era-EngA-EngB-Septin-like GTPase superfamily. EngA (Der) GTPase family. As to quaternary structure, associates with the 50S ribosomal subunit.

Its function is as follows. GTPase that plays an essential role in the late steps of ribosome biogenesis. The protein is GTPase Der of Heliobacterium modesticaldum (strain ATCC 51547 / Ice1).